Reading from the N-terminus, the 382-residue chain is Queuine tRNA-ribosyltransferase (382 aa).

Asp93 acts as the Proton acceptor in catalysis. Residues 93–97, Asp147, Gln191, and Gly218 each bind substrate; that span reads DSGGF. Residues 249–255 are RNA binding; the sequence is GVGKPED. Asp268 acts as the Nucleophile in catalysis. An RNA binding; important for wobble base 34 recognition region spans residues 273–277; it reads TRNAR. The Zn(2+) site is built by Cys306, Cys308, Cys311, and His337.

The protein belongs to the queuine tRNA-ribosyltransferase family. In terms of assembly, homodimer. Within each dimer, one monomer is responsible for RNA recognition and catalysis, while the other monomer binds to the replacement base PreQ1. Zn(2+) serves as cofactor.

It catalyses the reaction 7-aminomethyl-7-carbaguanine + guanosine(34) in tRNA = 7-aminomethyl-7-carbaguanosine(34) in tRNA + guanine. It participates in tRNA modification; tRNA-queuosine biosynthesis. Catalyzes the base-exchange of a guanine (G) residue with the queuine precursor 7-aminomethyl-7-deazaguanine (PreQ1) at position 34 (anticodon wobble position) in tRNAs with GU(N) anticodons (tRNA-Asp, -Asn, -His and -Tyr). Catalysis occurs through a double-displacement mechanism. The nucleophile active site attacks the C1' of nucleotide 34 to detach the guanine base from the RNA, forming a covalent enzyme-RNA intermediate. The proton acceptor active site deprotonates the incoming PreQ1, allowing a nucleophilic attack on the C1' of the ribose to form the product. After dissociation, two additional enzymatic reactions on the tRNA convert PreQ1 to queuine (Q), resulting in the hypermodified nucleoside queuosine (7-(((4,5-cis-dihydroxy-2-cyclopenten-1-yl)amino)methyl)-7-deazaguanosine). This Haemophilus influenzae (strain PittEE) protein is Queuine tRNA-ribosyltransferase.